Consider the following 520-residue polypeptide: Cysteine--tRNA ligase (520 aa).

Position 29 (Cys29) interacts with Zn(2+). Residues 31–41 (PTVYNYPHLGN) carry the 'HIGH' region motif. Zn(2+) contacts are provided by Cys227, His252, and Glu256. The 'KMSKS' region signature appears at 301-305 (KMSKS). Position 304 (Lys304) interacts with ATP.

Belongs to the class-I aminoacyl-tRNA synthetase family. As to quaternary structure, monomer. Zn(2+) serves as cofactor.

The protein localises to the cytoplasm. The enzyme catalyses tRNA(Cys) + L-cysteine + ATP = L-cysteinyl-tRNA(Cys) + AMP + diphosphate. This is Cysteine--tRNA ligase (cysS) from Treponema pallidum (strain Nichols).